The sequence spans 407 residues: Carbamoyl phosphate synthase small chain (407 aa).

The segment at 1–205 is CPSase; sequence MTETTPKTAP…LQDGYGEQDA (205 aa). Residues serine 60, glycine 257, and glycine 259 each contribute to the L-glutamine site. The 189-residue stretch at 209–397 folds into the Glutamine amidotransferase type-1 domain; the sequence is HVVALDFGVK…INLIRERKGQ (189 aa). The active-site Nucleophile is cysteine 286. Residues leucine 287, glutamine 290, asparagine 328, glycine 330, and phenylalanine 331 each contribute to the L-glutamine site. Active-site residues include histidine 370 and glutamate 372.

It belongs to the CarA family. In terms of assembly, composed of two chains; the small (or glutamine) chain promotes the hydrolysis of glutamine to ammonia, which is used by the large (or ammonia) chain to synthesize carbamoyl phosphate. Tetramer of heterodimers (alpha,beta)4.

The catalysed reaction is hydrogencarbonate + L-glutamine + 2 ATP + H2O = carbamoyl phosphate + L-glutamate + 2 ADP + phosphate + 2 H(+). It catalyses the reaction L-glutamine + H2O = L-glutamate + NH4(+). The protein operates within amino-acid biosynthesis; L-arginine biosynthesis; carbamoyl phosphate from bicarbonate: step 1/1. It functions in the pathway pyrimidine metabolism; UMP biosynthesis via de novo pathway; (S)-dihydroorotate from bicarbonate: step 1/3. Its function is as follows. Small subunit of the glutamine-dependent carbamoyl phosphate synthetase (CPSase). CPSase catalyzes the formation of carbamoyl phosphate from the ammonia moiety of glutamine, carbonate, and phosphate donated by ATP, constituting the first step of 2 biosynthetic pathways, one leading to arginine and/or urea and the other to pyrimidine nucleotides. The small subunit (glutamine amidotransferase) binds and cleaves glutamine to supply the large subunit with the substrate ammonia. The chain is Carbamoyl phosphate synthase small chain from Brucella canis (strain ATCC 23365 / NCTC 10854 / RM-666).